Reading from the N-terminus, the 482-residue chain is GTPase Der (482 aa).

2 consecutive EngA-type G domains span residues 3-166 (PVVA…SEQF) and 195-368 (IKLA…NSAT). Residues 9 to 16 (GRPNVGKS), 56 to 60 (DTGGI), 118 to 121 (NKVD), 201 to 208 (GKPNVGKS), 248 to 252 (DTAGV), and 313 to 316 (NKWD) contribute to the GTP site. Residues 369–453 (KRINTSMLTR…PIKVEFREGA (85 aa)) form the KH-like domain.

It belongs to the TRAFAC class TrmE-Era-EngA-EngB-Septin-like GTPase superfamily. EngA (Der) GTPase family. Associates with the 50S ribosomal subunit.

Its function is as follows. GTPase that plays an essential role in the late steps of ribosome biogenesis. This Pseudoalteromonas atlantica (strain T6c / ATCC BAA-1087) protein is GTPase Der.